A 304-amino-acid polypeptide reads, in one-letter code: N-acetylmuramic acid 6-phosphate etherase (304 aa).

Ser-2 carries the phosphoserine modification. Positions 59–222 constitute an SIS domain; the sequence is AYESFQNGGR…STAVMVKIGK (164 aa). The active-site Proton donor is the Glu-87. The active site involves Glu-118.

Belongs to the GCKR-like family. MurNAc-6-P etherase subfamily. In terms of assembly, homodimer.

The enzyme catalyses N-acetyl-D-muramate 6-phosphate + H2O = N-acetyl-D-glucosamine 6-phosphate + (R)-lactate. The protein operates within amino-sugar metabolism; N-acetylmuramate degradation. In terms of biological role, specifically catalyzes the cleavage of the D-lactyl ether substituent of MurNAc 6-phosphate, producing GlcNAc 6-phosphate and D-lactate. The sequence is that of N-acetylmuramic acid 6-phosphate etherase from Bacillus subtilis (strain 168).